Reading from the N-terminus, the 162-residue chain is Ribosome maturation factor RimP (162 aa).

This sequence belongs to the RimP family.

It is found in the cytoplasm. Required for maturation of 30S ribosomal subunits. The chain is Ribosome maturation factor RimP from Beutenbergia cavernae (strain ATCC BAA-8 / DSM 12333 / CCUG 43141 / JCM 11478 / NBRC 16432 / NCIMB 13614 / HKI 0122).